The chain runs to 100 residues: MERRDFKEQLKKTAHLARLHLTPEEEELFAKQLQNILDYFKKLQELDTSNVEPMAHVLPLYNIWREDEVRESISQEEALKNAPEIEDLGFKIPRIMKREE.

This sequence belongs to the GatC family. In terms of assembly, heterotrimer of A, B and C subunits.

The enzyme catalyses L-glutamyl-tRNA(Gln) + L-glutamine + ATP + H2O = L-glutaminyl-tRNA(Gln) + L-glutamate + ADP + phosphate + H(+). The catalysed reaction is L-aspartyl-tRNA(Asn) + L-glutamine + ATP + H2O = L-asparaginyl-tRNA(Asn) + L-glutamate + ADP + phosphate + 2 H(+). Allows the formation of correctly charged Asn-tRNA(Asn) or Gln-tRNA(Gln) through the transamidation of misacylated Asp-tRNA(Asn) or Glu-tRNA(Gln) in organisms which lack either or both of asparaginyl-tRNA or glutaminyl-tRNA synthetases. The reaction takes place in the presence of glutamine and ATP through an activated phospho-Asp-tRNA(Asn) or phospho-Glu-tRNA(Gln). The sequence is that of Aspartyl/glutamyl-tRNA(Asn/Gln) amidotransferase subunit C from Dictyoglomus thermophilum (strain ATCC 35947 / DSM 3960 / H-6-12).